Reading from the N-terminus, the 110-residue chain is Large ribosomal subunit protein uL22 (110 aa).

The protein belongs to the universal ribosomal protein uL22 family. In terms of assembly, part of the 50S ribosomal subunit.

In terms of biological role, this protein binds specifically to 23S rRNA; its binding is stimulated by other ribosomal proteins, e.g. L4, L17, and L20. It is important during the early stages of 50S assembly. It makes multiple contacts with different domains of the 23S rRNA in the assembled 50S subunit and ribosome. The globular domain of the protein is located near the polypeptide exit tunnel on the outside of the subunit, while an extended beta-hairpin is found that lines the wall of the exit tunnel in the center of the 70S ribosome. The chain is Large ribosomal subunit protein uL22 from Vibrio cholerae serotype O1 (strain ATCC 39541 / Classical Ogawa 395 / O395).